Consider the following 721-residue polypeptide: MPPTATAEPVTASTHMLSNETDYHALNAMLNLYDADGKIQFDKDVLAARQFFLQHVNQNTVFFHNQDEKLDYLIRENYYEREVLDQYSRNFVKSLLDRAYAKKFRFSTFLGAFKYYTSYTLKTFDGKRYLERLEDRVCMVALTLAAGDTGLAEKLVDEIIDGRFQPATPTFLNSGKKQRGEPVSCFLLRIEDNMESIGRSVNSALQLSKRGGGVALLLSNIREHGAPIKNIEHQSSGVIPIMKLLEDAFSYANQLGARQGAGAVYLHAHHPDIYRFLDTKRENADEKIRIKTLSLGVIIPDITFELAKRNEDMYLFSSYDVERVYEVPFADISVTEKYYEMLDDARIRKTKIKAREFFQKLAELQFESGYPYVMFEDTVNRANPIEGKITHSNLCSEILQVSTPSLFNDDLSYAKVGKDISCNLGSLNIAKTMDSPDFAQTVEVAIRALTAVSDQTHIKSVPSIEQGNNDSHAIGLGQMNLHGYLSREGIFYGSEEGVDFTNIYFYTVLFHVLLASNSIAIERGTFFKGFERSKYASGEFFDKYIEQTWEPKTDKVRQLFAEAAIRIPTQNDWKRLKELVVAHGIYNQNLQAVPPTGSISYINHSTSSIHPIVSKVEIRKEGKIGRVYYPAPYMTNDNLQYYQDAYEIGYQKIIDTYAAATQHVDQGLSLTLFFKDTATTRDVNKAQIYAWRKGIKTLYYIRLRQMALEGTEVEGCVSCTL.

Substrate contacts are provided by residues threonine 168, 184 to 185 (SC), glycine 213, 393 to 397 (NLCSE), and 595 to 599 (PTGSI). A disulfide bond links cysteine 185 and cysteine 422. The Proton acceptor role is filled by asparagine 393. Catalysis depends on cysteine 395, which acts as the Cysteine radical intermediate. Glutamate 397 (proton acceptor) is an active-site residue.

It belongs to the ribonucleoside diphosphate reductase large chain family. In terms of assembly, tetramer of two alpha and two beta subunits.

The catalysed reaction is a 2'-deoxyribonucleoside 5'-diphosphate + [thioredoxin]-disulfide + H2O = a ribonucleoside 5'-diphosphate + [thioredoxin]-dithiol. Under complex allosteric control mediated by deoxynucleoside triphosphates and ATP binding. The type of nucleotide bound at the specificity site determines substrate preference. It seems probable that ATP makes the enzyme reduce CDP and UDP, dGTP favors ADP reduction and dTTP favors GDP reduction. Functionally, provides the precursors necessary for DNA synthesis. Catalyzes the biosynthesis of deoxyribonucleotides from the corresponding ribonucleotides. This is Ribonucleoside-diphosphate reductase subunit alpha (nrdE) from Mycobacterium leprae (strain TN).